We begin with the raw amino-acid sequence, 393 residues long: S-adenosylmethionine synthase 1 (393 aa).

Position 9 (E9) interacts with Mg(2+). Position 15 (H15) interacts with ATP. A K(+)-binding site is contributed by E43. Residues E56 and Q99 each coordinate L-methionine. ATP is bound by residues 167-169 (DGK), 235-238 (SGRF), D246, 252-253 (RK), A269, K273, and K277. D246 serves as a coordination point for L-methionine. K277 serves as a coordination point for L-methionine.

Belongs to the AdoMet synthase family. Homotetramer. The cofactor is Mn(2+). Mg(2+) is required as a cofactor. Co(2+) serves as cofactor. It depends on K(+) as a cofactor. Mostly expressed in stems.

It localises to the cytoplasm. The catalysed reaction is L-methionine + ATP + H2O = S-adenosyl-L-methionine + phosphate + diphosphate. It functions in the pathway amino-acid biosynthesis; S-adenosyl-L-methionine biosynthesis; S-adenosyl-L-methionine from L-methionine: step 1/1. Its function is as follows. Catalyzes the formation of S-adenosylmethionine from methionine and ATP. The reaction comprises two steps that are both catalyzed by the same enzyme: formation of S-adenosylmethionine (AdoMet) and triphosphate, and subsequent hydrolysis of the triphosphate. This is S-adenosylmethionine synthase 1 (SAM1) from Solanum lycopersicum (Tomato).